We begin with the raw amino-acid sequence, 167 residues long: UPF0225 protein VV1_2912 (167 aa).

It belongs to the UPF0225 family.

This is UPF0225 protein VV1_2912 from Vibrio vulnificus (strain CMCP6).